Reading from the N-terminus, the 313-residue chain is uncharacterized protein (313 aa).

29–61 (ALVTGGGTGLGKAIATTFAHLGASVAIAARRLD) lines the NADP(+) pocket.

This sequence belongs to the short-chain dehydrogenases/reductases (SDR) family. 2,4-dienoyl-CoA reductase subfamily.

This is an uncharacterized protein from Caenorhabditis elegans.